A 353-amino-acid polypeptide reads, in one-letter code: Nicotinate-nucleotide--dimethylbenzimidazole phosphoribosyltransferase (353 aa).

Catalysis depends on E318, which acts as the Proton acceptor.

Belongs to the CobT family.

The enzyme catalyses 5,6-dimethylbenzimidazole + nicotinate beta-D-ribonucleotide = alpha-ribazole 5'-phosphate + nicotinate + H(+). It functions in the pathway nucleoside biosynthesis; alpha-ribazole biosynthesis; alpha-ribazole from 5,6-dimethylbenzimidazole: step 1/2. In terms of biological role, catalyzes the synthesis of alpha-ribazole-5'-phosphate from nicotinate mononucleotide (NAMN) and 5,6-dimethylbenzimidazole (DMB). This chain is Nicotinate-nucleotide--dimethylbenzimidazole phosphoribosyltransferase, found in Geobacter metallireducens (strain ATCC 53774 / DSM 7210 / GS-15).